The chain runs to 165 residues: Protein-export protein SecB (165 aa).

This sequence belongs to the SecB family. As to quaternary structure, homotetramer, a dimer of dimers. One homotetramer interacts with 1 SecA dimer.

It localises to the cytoplasm. Functionally, one of the proteins required for the normal export of preproteins out of the cell cytoplasm. It is a molecular chaperone that binds to a subset of precursor proteins, maintaining them in a translocation-competent state. It also specifically binds to its receptor SecA. This chain is Protein-export protein SecB, found in Colwellia psychrerythraea (strain 34H / ATCC BAA-681) (Vibrio psychroerythus).